The sequence spans 761 residues: Neutral ceramidase (761 aa).

Over 1-11 (MAKRTFSSLEA) the chain is Cytoplasmic. A helical; Signal-anchor for type II membrane protein transmembrane segment spans residues 12 to 32 (FLIFLLVMMTAITVALLTLLF). Residues 33-761 (VTSGTIENHK…ISSPFEIVTT (729 aa)) lie on the Lumenal side of the membrane. Positions 43–76 (DSGNHWVSTTQGPTTTQSSPTTQTPTTQTPDLPP) are disordered. The span at 50–76 (STTQGPTTTQSSPTTQTPTTQTPDLPP) shows a compositional bias: low complexity. O-linked (GalNAc...) threonine glycosylation is found at Thr51, Thr52, Thr56, Thr57, and Thr58. 2 O-linked (GalNAc...) serine glycosylation sites follow: Ser60 and Ser61. Thr63, Thr64, Thr66, Thr68, Thr69, and Thr71 each carry an O-linked (GalNAc...) threonine glycan. Ca(2+) is bound at residue Leu115. His175 provides a ligand contact to Zn(2+). The N-linked (GlcNAc...) asparagine glycan is linked to Asn198. His284 is a Zn(2+) binding site. The active-site Nucleophile is the Ser335. 2 disulfide bridges follow: Cys343/Cys357 and Cys350/Cys365. Asn412 and Asn449 each carry an N-linked (GlcNAc...) asparagine glycan. Cys429 and Cys479 are joined by a disulfide. Residues Glu521 and Tyr560 each coordinate Zn(2+). Asp693, Ser695, and Thr698 together coordinate Ca(2+). The segment at 751–761 (GISSPFEIVTT) is required for correct folding and localization.

Belongs to the neutral ceramidase family. Zn(2+) serves as cofactor. Proteolytic cleavage of the N-terminus removes the signal-anchor and produces a soluble form of the protein. Post-translationally, N-glycosylated. Required for enzyme activity. In terms of processing, O-glycosylated. Required to retain it as a type II membrane protein at the cell surface. Phosphorylated. May prevent ubiquitination and subsequent degradation. Post-translationally, ubiquitinated, leading to its degradation by the proteasome. Ubiquitination is triggered by nitric oxide. Highly expressed in brain, kidney and heart. Expressed at lower level in other tissues such as liver. Expressed in intestine, kidney and liver (at protein level). Localizes in the epithelia of the jejunum and ileum.

Its subcellular location is the cell membrane. It localises to the membrane raft. The protein resides in the membrane. It is found in the caveola. The protein localises to the golgi apparatus membrane. Its subcellular location is the mitochondrion. It localises to the secreted. The protein resides in the extracellular exosome. It carries out the reaction an N-acylsphing-4-enine + H2O = sphing-4-enine + a fatty acid. The enzyme catalyses N-hexadecanoylsphing-4-enine + H2O = sphing-4-enine + hexadecanoate. It catalyses the reaction N-tetradecanoylsphing-4-enine + H2O = tetradecanoate + sphing-4-enine. The catalysed reaction is N-(9Z-octadecenoyl)-sphing-4-enine + H2O = sphing-4-enine + (9Z)-octadecenoate. It carries out the reaction N-(15Z-tetracosenoyl)-sphing-4-enine + H2O = (15Z)-tetracosenoate + sphing-4-enine. The enzyme catalyses N-octanoylsphing-4-enine + H2O = octanoate + sphing-4-enine. It catalyses the reaction N-dodecanoylsphing-4-enine + H2O = dodecanoate + sphing-4-enine. The catalysed reaction is N-(hexanoyl)sphing-4-enine + H2O = hexanoate + sphing-4-enine. It carries out the reaction N-octadecanoylsphing-4-enine + H2O = sphing-4-enine + octadecanoate. The enzyme catalyses sphinganine + hexadecanoate = N-hexadecanoylsphinganine + H2O. It catalyses the reaction N-(octadecanoyl)-sphinganine + H2O = sphinganine + octadecanoate. The protein operates within lipid metabolism; sphingolipid metabolism. With respect to regulation, the reverse reaction is inhibited by Zn(2+) and Cu(2+). Inhibited by cardiolipin and phosphatidic acid. Its function is as follows. Plasma membrane ceramidase that hydrolyzes sphingolipid ceramides into sphingosine and free fatty acids at neutral pH. Ceramides, sphingosine, and its phosphorylated form sphingosine-1-phosphate are bioactive lipids that mediate cellular signaling pathways regulating several biological processes including cell proliferation, apoptosis and differentiation. Also catalyzes the reverse reaction allowing the synthesis of ceramides from fatty acids and sphingosine. Together with sphingomyelinase, participates in the production of sphingosine and sphingosine-1-phosphate from the degradation of sphingomyelin, a sphingolipid enriched in the plasma membrane of cells. Also participates in the hydrolysis of ceramides from the extracellular milieu allowing the production of sphingosine-1-phosphate inside and outside cells. This is the case for instance with the digestion of dietary sphingolipids in the intestinal tract. This chain is Neutral ceramidase (Asah2), found in Rattus norvegicus (Rat).